Reading from the N-terminus, the 496-residue chain is UDP-glycosyltransferase 84A2 (496 aa).

The active-site Proton acceptor is the His-23. His-23 lines the an anthocyanidin pocket. The UDP-alpha-D-glucose site is built by Gln-352, His-367, Trp-370, Asn-371, Ser-372, and Glu-375. Gly-390 contributes to the an anthocyanidin binding site. UDP-alpha-D-glucose-binding residues include Asp-391 and Gln-392.

Belongs to the UDP-glycosyltransferase family. As to expression, expressed in roots, cotyledons, leaf veins and trichomes.

It carries out the reaction (E)-sinapate + UDP-alpha-D-glucose = 1-O-(trans-sinapoyl)-beta-D-glucose + UDP. Sinapate glucosyltransferase (SGT) required for the biosynthesis of the glucose ester sinapoylglucose and subsequently sinapoylmalate and sinapoylcholine. Is the major SGT activity in plant. Plays an important role in sinapoylation of anthocyanins. Sinapoylglucose produced by UGT84A2 is a significant source of sinapoyl moieties for anthocyanins. Indole-3-butyric acid (IBA)-specific glucosyltransferase that catalyzes the glucosylation of the auxin IBA, but not indole-3-acetic acid (IAA). May be involved in flowering regulation through IBA-mediated transcriptional repression of the auxin-response factors ARF6 and ARF8 and downstream flowering pathway genes. Can glucosylate the phytotoxic xenobiotic compound 2,4,5-trichlorophenol (TCP). This is UDP-glycosyltransferase 84A2 from Arabidopsis thaliana (Mouse-ear cress).